The following is a 420-amino-acid chain: 4-hydroxy-3-methylbut-2-en-1-yl diphosphate synthase (flavodoxin) (420 aa).

Cys307, Cys310, Cys353, and Glu360 together coordinate [4Fe-4S] cluster.

This sequence belongs to the IspG family. It depends on [4Fe-4S] cluster as a cofactor.

It carries out the reaction (2E)-4-hydroxy-3-methylbut-2-enyl diphosphate + oxidized [flavodoxin] + H2O + 2 H(+) = 2-C-methyl-D-erythritol 2,4-cyclic diphosphate + reduced [flavodoxin]. It functions in the pathway isoprenoid biosynthesis; isopentenyl diphosphate biosynthesis via DXP pathway; isopentenyl diphosphate from 1-deoxy-D-xylulose 5-phosphate: step 5/6. In terms of biological role, converts 2C-methyl-D-erythritol 2,4-cyclodiphosphate (ME-2,4cPP) into 1-hydroxy-2-methyl-2-(E)-butenyl 4-diphosphate. The protein is 4-hydroxy-3-methylbut-2-en-1-yl diphosphate synthase (flavodoxin) of Brucella suis (strain ATCC 23445 / NCTC 10510).